The primary structure comprises 131 residues: Small ribosomal subunit protein bS6 (131 aa).

Positions 97-131 (TEASPMVKAKDERRRDVAEDLDEEEVDDVAEDSEE) are disordered. Positions 104-114 (KAKDERRRDVA) are enriched in basic and acidic residues. Over residues 115-131 (EDLDEEEVDDVAEDSEE) the composition is skewed to acidic residues.

Belongs to the bacterial ribosomal protein bS6 family.

In terms of biological role, binds together with bS18 to 16S ribosomal RNA. This Proteus mirabilis (strain HI4320) protein is Small ribosomal subunit protein bS6.